Reading from the N-terminus, the 740-residue chain is Vacuolar protein sorting-associated protein 51 homolog (740 aa).

Coiled-coil stretches lie at residues 65 to 87 and 322 to 344; these read SATDTIRRMKDDFKQMETDVNLL and RALDRLHRRLQAMRNICRGLEVQ.

It belongs to the VPS51 family. In terms of assembly, component of the Golgi-associated retrograde protein (GARP) complex.

May act as a component of the GARP complex that is involved in retrograde transport from early and late endosomes to the trans-Golgi network (TGN). The protein is Vacuolar protein sorting-associated protein 51 homolog of Drosophila melanogaster (Fruit fly).